The sequence spans 317 residues: tRNA dimethylallyltransferase (317 aa).

G14–T21 is a binding site for ATP. Substrate is bound at residue T16–T21. 2 interaction with substrate tRNA regions span residues D39–L42 and Q163–R167.

This sequence belongs to the IPP transferase family. Monomer. Requires Mg(2+) as cofactor.

It carries out the reaction adenosine(37) in tRNA + dimethylallyl diphosphate = N(6)-dimethylallyladenosine(37) in tRNA + diphosphate. In terms of biological role, catalyzes the transfer of a dimethylallyl group onto the adenine at position 37 in tRNAs that read codons beginning with uridine, leading to the formation of N6-(dimethylallyl)adenosine (i(6)A). The polypeptide is tRNA dimethylallyltransferase (Stenotrophomonas maltophilia (strain R551-3)).